An 814-amino-acid polypeptide reads, in one-letter code: MGKIGIVFFASLLFLLIIFPSCAFAAITRASPLSIGQTLSSPNGTYELGFFSPNNSRNQYVGIWFKNITPRVVVWVANRDKPVTNNAANLTINSNGSLILVEREQNVVWSIGETFSSNELRAELLENGNLVLIDGVSERNLWESFEHLGDTMLLESSVMYDVPNNKKRVLSSWKNPTDPSPGEFVAELTTQVPPQGFIMRGSRPYWRGGPWARVRFTGIPEMDGSHVSKFDISQDVAAGTGSLTYSLERRNSNLSYTTLTSAGSLKIIWNNGSGWVTDLEAPVSSCDVYNTCGPFGLCIRSNPPKCECLKGFVPKSDEEWNKRNWTGGCMRRTNLSCDVNSSATAQANNGDIFDIVANVKPPDFYEYLSLINEEDCQQRCLGNCSCTAFSYIEQIGCLVWNRELVDVMQFVAGGETLSIRLASSELAGSNRVKIIVASIVSISVFMILVFASYWYWRYKAKQNDSNPIPLETSQDAWREQLKPQDVNFFDMQTILTITNNFSMENKLGQGGFGPVYKGNLQDGKEIAIKRLSSTSGQGLEEFMNEIILISKLQHRNLVRLLGCCIEGEEKLLIYEFMANKSLNTFIFDSTKKLELDWPKRFEIIQGIACGLLYLHRDSCLRVVHRDMKVSNILLDEEMNPKISDFGLARMFQGTQHQANTRRVVGTLGYMSPEYAWTGMFSEKSDIYAFGVLLLEIITGKRISSFTIGEEGKTLLEFAWDSWCESGGSDLLDQDISSSGSESEVARCVQIGLLCIQQQAGDRPNIAQVMSMLTTTMDLPKPKQPVFAMQVQESDSESKTMYSVNNITQTAIVGR.

The signal sequence occupies residues 1–25 (MGKIGIVFFASLLFLLIIFPSCAFA). Positions 26–145 (AITRASPLSI…VSERNLWESF (120 aa)) constitute a Bulb-type lectin domain. Over 26–433 (AITRASPLSI…SELAGSNRVK (408 aa)) the chain is Extracellular. 6 N-linked (GlcNAc...) asparagine glycosylation sites follow: Asn-43, Asn-54, Asn-89, Asn-95, Asn-253, and Asn-271. In terms of domain architecture, EGF-like spans 282-318 (PVSSCDVYNTCGPFGLCIRSNPPKCECLKGFVPKSDE). Disulfide bonds link Cys-286–Cys-298 and Cys-292–Cys-306. Residues Asn-324, Asn-334, Asn-340, and Asn-383 are each glycosylated (N-linked (GlcNAc...) asparagine). Residues 337–423 (CDVNSSATAQ…GETLSIRLAS (87 aa)) form the PAN domain. Disulfide bonds link Cys-376-Cys-397 and Cys-380-Cys-386. The chain crosses the membrane as a helical span at residues 434–454 (IIVASIVSISVFMILVFASYW). Residues 455–814 (YWRYKAKQND…NITQTAIVGR (360 aa)) lie on the Cytoplasmic side of the membrane. Residues 501 to 786 (FSMENKLGQG…DLPKPKQPVF (286 aa)) form the Protein kinase domain. ATP is bound by residues 507–515 (LGQGGFGPV) and Lys-529. Phosphoserine occurs at positions 535 and 550. The caM-binding stretch occupies residues 590-607 (TKKLELDWPKRFEIIQGI). Asp-626 (proton acceptor) is an active-site residue. Phosphoserine occurs at positions 630 and 643. The residue at position 660 (Thr-660) is a Phosphothreonine. Ser-703, Ser-704, Ser-797, and Ser-802 each carry phosphoserine. Phosphothreonine is present on Thr-809.

The protein belongs to the protein kinase superfamily. Ser/Thr protein kinase family.

Its subcellular location is the cell membrane. It catalyses the reaction L-seryl-[protein] + ATP = O-phospho-L-seryl-[protein] + ADP + H(+). The catalysed reaction is L-threonyl-[protein] + ATP = O-phospho-L-threonyl-[protein] + ADP + H(+). The protein is G-type lectin S-receptor-like serine/threonine-protein kinase At1g61370 of Arabidopsis thaliana (Mouse-ear cress).